Reading from the N-terminus, the 228-residue chain is 2,3-bisphosphoglycerate-dependent phosphoglycerate mutase (228 aa).

Substrate contacts are provided by residues 7–14 (RHGESAWN), 20–21 (TG), Arg-59, 86–89 (ERHY), Lys-97, 113–114 (RR), and 182–183 (GN). His-8 acts as the Tele-phosphohistidine intermediate in catalysis. The Proton donor/acceptor role is filled by Glu-86.

The protein belongs to the phosphoglycerate mutase family. BPG-dependent PGAM subfamily.

The catalysed reaction is (2R)-2-phosphoglycerate = (2R)-3-phosphoglycerate. It participates in carbohydrate degradation; glycolysis; pyruvate from D-glyceraldehyde 3-phosphate: step 3/5. Functionally, catalyzes the interconversion of 2-phosphoglycerate and 3-phosphoglycerate. This chain is 2,3-bisphosphoglycerate-dependent phosphoglycerate mutase, found in Fusobacterium nucleatum subsp. nucleatum (strain ATCC 25586 / DSM 15643 / BCRC 10681 / CIP 101130 / JCM 8532 / KCTC 2640 / LMG 13131 / VPI 4355).